Consider the following 223-residue polypeptide: Ribose-5-phosphate isomerase A (223 aa).

Residues 28-31, 81-84, and 94-97 each bind substrate; these read TGST, DGAD, and KGGG. The active-site Proton acceptor is E103. Residue K121 coordinates substrate.

It belongs to the ribose 5-phosphate isomerase family. Homodimer.

It catalyses the reaction aldehydo-D-ribose 5-phosphate = D-ribulose 5-phosphate. The protein operates within carbohydrate degradation; pentose phosphate pathway; D-ribose 5-phosphate from D-ribulose 5-phosphate (non-oxidative stage): step 1/1. Its function is as follows. Catalyzes the reversible conversion of ribose-5-phosphate to ribulose 5-phosphate. This Ruthia magnifica subsp. Calyptogena magnifica protein is Ribose-5-phosphate isomerase A.